The primary structure comprises 475 residues: Ribulose bisphosphate carboxylase large chain (475 aa).

Residues 1–2 (MS) constitute a propeptide that is removed on maturation. P3 carries the post-translational modification N-acetylproline. K14 carries the post-translational modification N6,N6,N6-trimethyllysine. Positions 123 and 173 each coordinate substrate. The active-site Proton acceptor is the K175. A substrate-binding site is contributed by K177. 3 residues coordinate Mg(2+): K201, D203, and E204. At K201 the chain carries N6-carboxylysine. H294 functions as the Proton acceptor in the catalytic mechanism. Residues R295, H327, and S379 each coordinate substrate.

The protein belongs to the RuBisCO large chain family. Type I subfamily. In terms of assembly, heterohexadecamer of 8 large chains and 8 small chains; disulfide-linked. The disulfide link is formed within the large subunit homodimers. Mg(2+) serves as cofactor. Post-translationally, the disulfide bond which can form in the large chain dimeric partners within the hexadecamer appears to be associated with oxidative stress and protein turnover.

It is found in the plastid. It localises to the chloroplast. The enzyme catalyses 2 (2R)-3-phosphoglycerate + 2 H(+) = D-ribulose 1,5-bisphosphate + CO2 + H2O. It catalyses the reaction D-ribulose 1,5-bisphosphate + O2 = 2-phosphoglycolate + (2R)-3-phosphoglycerate + 2 H(+). In terms of biological role, ruBisCO catalyzes two reactions: the carboxylation of D-ribulose 1,5-bisphosphate, the primary event in carbon dioxide fixation, as well as the oxidative fragmentation of the pentose substrate in the photorespiration process. Both reactions occur simultaneously and in competition at the same active site. The protein is Ribulose bisphosphate carboxylase large chain of Pinus koraiensis (Korean pine).